The following is a 214-amino-acid chain: UPF0301 protein NFA_55110 (214 aa).

A disordered region spans residues 1-24 (MARADDPDERKTQGGHGDRRRREF).

This sequence belongs to the UPF0301 (AlgH) family.

The chain is UPF0301 protein NFA_55110 from Nocardia farcinica (strain IFM 10152).